Consider the following 205-residue polypeptide: Putative 3-methyladenine DNA glycosylase (205 aa).

It belongs to the DNA glycosylase MPG family.

The chain is Putative 3-methyladenine DNA glycosylase from Mycolicibacterium paratuberculosis (strain ATCC BAA-968 / K-10) (Mycobacterium paratuberculosis).